The sequence spans 428 residues: UPF0761 membrane protein Ppha_1623 (428 aa).

6 helical membrane-spanning segments follow: residues 52–72 (LLSI…FVVF), 108–128 (SVPI…ISTV), 148–168 (FTLY…SLAA), 189–209 (LLSF…YMLV), 216–233 (FVHA…FELS), and 252–272 (GALS…IVVL).

Belongs to the UPF0761 family.

The protein localises to the cell inner membrane. This chain is UPF0761 membrane protein Ppha_1623, found in Pelodictyon phaeoclathratiforme (strain DSM 5477 / BU-1).